A 471-amino-acid polypeptide reads, in one-letter code: DENN domain-containing protein 2D (471 aa).

A uDENN domain is found at 55-204 (EYLLVVSLKK…AFPAPGKTVT (150 aa)). In terms of domain architecture, cDENN spans 226-359 (HLEHVDFSSL…LQDDILDSLG (134 aa)). In terms of domain architecture, dDENN spans 361–445 (GINELKTAEQ…QEAEKSKNPP (85 aa)).

As to expression, in bronchial mucosa, mainly expressed in ciliated and basal epithelial cells and weakly in alveolar cells (at protein level). Tends to be down-regulated in lung cancers, immortalized bronchial epithelial cell lines and precancerous lesions.

The protein localises to the cytoplasm. Guanine nucleotide exchange factor (GEF) which may activate RAB9A and RAB9B. Promotes the exchange of GDP to GTP, converting inactive GDP-bound Rab proteins into their active GTP-bound form. This chain is DENN domain-containing protein 2D (DENND2D), found in Homo sapiens (Human).